Here is a 246-residue protein sequence, read N- to C-terminus: 1-(5-phosphoribosyl)-5-[(5-phosphoribosylamino)methylideneamino] imidazole-4-carboxamide isomerase (246 aa).

Asp-10 (proton acceptor) is an active-site residue. Asp-135 (proton donor) is an active-site residue.

This sequence belongs to the HisA/HisF family.

Its subcellular location is the cytoplasm. It carries out the reaction 1-(5-phospho-beta-D-ribosyl)-5-[(5-phospho-beta-D-ribosylamino)methylideneamino]imidazole-4-carboxamide = 5-[(5-phospho-1-deoxy-D-ribulos-1-ylimino)methylamino]-1-(5-phospho-beta-D-ribosyl)imidazole-4-carboxamide. Its pathway is amino-acid biosynthesis; L-histidine biosynthesis; L-histidine from 5-phospho-alpha-D-ribose 1-diphosphate: step 4/9. The polypeptide is 1-(5-phosphoribosyl)-5-[(5-phosphoribosylamino)methylideneamino] imidazole-4-carboxamide isomerase (Methanococcoides burtonii (strain DSM 6242 / NBRC 107633 / OCM 468 / ACE-M)).